Here is a 69-residue protein sequence, read N- to C-terminus: Large ribosomal subunit protein uL29 (69 aa).

This sequence belongs to the universal ribosomal protein uL29 family.

This is Large ribosomal subunit protein uL29 from Synechococcus sp. (strain CC9902).